A 174-amino-acid polypeptide reads, in one-letter code: Peptide deformylase (174 aa).

Fe cation contacts are provided by Cys96 and His138. The active site involves Glu139. His142 contributes to the Fe cation binding site.

It belongs to the polypeptide deformylase family. It depends on Fe(2+) as a cofactor.

The enzyme catalyses N-terminal N-formyl-L-methionyl-[peptide] + H2O = N-terminal L-methionyl-[peptide] + formate. Its function is as follows. Removes the formyl group from the N-terminal Met of newly synthesized proteins. Requires at least a dipeptide for an efficient rate of reaction. N-terminal L-methionine is a prerequisite for activity but the enzyme has broad specificity at other positions. This chain is Peptide deformylase, found in Helicobacter pylori (strain P12).